A 390-amino-acid polypeptide reads, in one-letter code: Dynein regulatory complex subunit 5 (390 aa).

LRR repeat units follow at residues 182–205 (TETL…MLAS), 210–233 (NLSI…ALAK), and 238–261 (HSVI…SLAR).

It belongs to the DRC5 family. Component of the nexin-dynein regulatory complex (N-DRC). Interacts with DRC1, DRC2, DRC3, DRC4, DRC7 and DRC11.

It is found in the cell projection. The protein resides in the cilium. Its subcellular location is the flagellum. It localises to the cytoplasm. The protein localises to the cytoskeleton. It is found in the flagellum axoneme. In terms of biological role, component of the nexin-dynein regulatory complex (N-DRC) a key regulator of ciliary/flagellar motility which maintains the alignment and integrity of the distal axoneme and regulates microtubule sliding in motile axonemes. May play a role in the assembly of N-DRC. The polypeptide is Dynein regulatory complex subunit 5 (Chlamydomonas reinhardtii (Chlamydomonas smithii)).